A 241-amino-acid chain; its full sequence is Zinc finger CCHC domain-containing protein 24 (241 aa).

A phosphoserine mark is found at serine 65 and serine 93. The CCHC-type zinc-finger motif lies at tyrosine 132–glutamine 149.

The protein is Zinc finger CCHC domain-containing protein 24 of Mus musculus (Mouse).